A 218-amino-acid chain; its full sequence is Ras-related protein Rab-42 (218 aa).

GTP is bound by residues A19, G21, K22, T23, and T46. Mg(2+) contacts are provided by T23, T46, and D70. 5 residues coordinate GTP: G73, K130, D132, V160, and K161. Residues C216 and C218 are each lipidated (S-geranylgeranyl cysteine).

Belongs to the small GTPase superfamily. Rab family. Mg(2+) is required as a cofactor.

It localises to the membrane. The enzyme catalyses GTP + H2O = GDP + phosphate + H(+). Its activity is regulated as follows. Regulated by guanine nucleotide exchange factors (GEFs) which promote the exchange of bound GDP for free GTP. Regulated by GTPase activating proteins (GAPs) which increase the GTP hydrolysis activity. Inhibited by GDP dissociation inhibitors (GDIs). In terms of biological role, the small GTPases Rab are key regulators of intracellular membrane trafficking, from the formation of transport vesicles to their fusion with membranes. Rabs cycle between an inactive GDP-bound form and an active GTP-bound form that is able to recruit to membranes different sets of downstream effectors directly responsible for vesicle formation, movement, tethering and fusion. The physiological function of RAB42 remains undefined. This chain is Ras-related protein Rab-42, found in Homo sapiens (Human).